We begin with the raw amino-acid sequence, 505 residues long: Maturase K (505 aa).

The protein belongs to the intron maturase 2 family. MatK subfamily.

It localises to the plastid. Its subcellular location is the chloroplast. Its function is as follows. Usually encoded in the trnK tRNA gene intron. Probably assists in splicing its own and other chloroplast group II introns. The sequence is that of Maturase K from Amaranthus greggii (Gregg's amaranth).